A 63-amino-acid chain; its full sequence is ATP synthase membrane subunit K, mitochondrial (63 aa).

A helical membrane pass occupies residues 15 to 37; it reads TMRGRANVAKATWASLGLVYVLV.

F-type ATPases have 2 components, CF(1) - the catalytic core - and CF(0) - the membrane proton channel. CF(1) has five subunits: alpha(3), beta(3), gamma(1), delta(1), epsilon(1). CF(0) has three main subunits: a, b and c. The ATP synthase complex/complex V exists as a monomeric and a dimeric supercomplex that helps shape mitochondrial cristae to optimize proton flow.

The protein localises to the mitochondrion membrane. In terms of biological role, mitochondrial membrane ATP synthase (F(1)F(0) ATP synthase or Complex V) produces ATP from ADP in the presence of a proton gradient across the membrane which is generated by electron transport complexes of the respiratory chain. F-type ATPases consist of two structural domains, F(1) - containing the extramembraneous catalytic core and F(0) - containing the membrane proton channel, linked together by a central stalk and a peripheral stalk. During catalysis, ATP synthesis in the catalytic domain of F(1) is coupled via a rotary mechanism of the central stalk subunits to proton translocation. ATP5MK is a minor subunit of the mitochondrial membrane ATP synthase required for dimerization of the ATP synthase complex and as such regulates ATP synthesis in the mitochondria. In Drosophila melanogaster (Fruit fly), this protein is ATP synthase membrane subunit K, mitochondrial.